The primary structure comprises 337 residues: Outer membrane protein U (337 aa).

The N-terminal stretch at 1–21 is a signal peptide; it reads MKKTLIALSVSAAAMATGVNA.

The protein belongs to the Gram-negative porin family. Homotrimer.

It is found in the cell outer membrane. Forms pores that allow passive diffusion of small molecules across the outer membrane. This Vibrio parahaemolyticus serotype O3:K6 (strain RIMD 2210633) protein is Outer membrane protein U (ompU).